The following is a 200-amino-acid chain: LexA repressor (200 aa).

Catalysis depends on for autocatalytic cleavage activity residues Ser121 and Lys158.

Belongs to the peptidase S24 family. Homodimer.

The enzyme catalyses Hydrolysis of Ala-|-Gly bond in repressor LexA.. Binds a consensus sequence 5'-TGTTC-N(4)-GAACA-3'; some genes have a tandem consensus sequence and their binding is cooperative. Binds to the promoters of a number of genes, including lexA and splB. Represses a number of genes involved in the response to DNA damage (SOS response). The polypeptide is LexA repressor (Opitutus terrae (strain DSM 11246 / JCM 15787 / PB90-1)).